The sequence spans 184 residues: Casparian strip membrane protein 1 (184 aa).

The Cytoplasmic portion of the chain corresponds to 1–24; the sequence is MKESGEHGETSKAPLNRGVSKGLS. A helical transmembrane segment spans residues 25 to 45; sequence VLDLILRFIAIIGTLASAIAM. Residues 46–72 lie on the Extracellular side of the membrane; it reads GTTNETLPFFTQFIRFKAQYSDLPTLT. An N-linked (GlcNAc...) asparagine glycan is attached at N49. A helical membrane pass occupies residues 73–93; sequence FFVVANSIVCAYLILSLPLSI. At 94–105 the chain is on the cytoplasmic side; the sequence is VHIIRSRAKFSR. Residues 106–126 traverse the membrane as a helical segment; the sequence is LLLIFLDAVMLALVTAGASAA. The Extracellular segment spans residues 127-159; sequence AAIVYLAHKGNVRANWLAICQQFDSFCERISGS. Residues 160–180 form a helical membrane-spanning segment; that stretch reads LIGSFGAMVVLILLILLSAIA. Topologically, residues 181-184 are cytoplasmic; that stretch reads LARR.

It belongs to the Casparian strip membrane proteins (CASP) family. As to quaternary structure, homodimer and heterodimers.

The protein localises to the cell membrane. In terms of biological role, regulates membrane-cell wall junctions and localized cell wall deposition. Required for establishment of the Casparian strip membrane domain (CSD) and the subsequent formation of Casparian strips, a cell wall modification of the root endodermis that determines an apoplastic barrier between the intraorganismal apoplasm and the extraorganismal apoplasm and prevents lateral diffusion. This is Casparian strip membrane protein 1 from Panicum virgatum (Blackwell switchgrass).